Here is an 81-residue protein sequence, read N- to C-terminus: Photosystem I iron-sulfur center (81 aa).

4Fe-4S ferredoxin-type domains are found at residues 2 to 31 (SHSVKIYDTCIGCTQCVRACPTDVLEMIPW) and 39 to 68 (IASAPRTEDCVGCKRCESACPTDFLSVRVY). [4Fe-4S] cluster is bound by residues C11, C14, C17, C21, C48, C51, C54, and C58.

The eukaryotic PSI reaction center is composed of at least 11 subunits. [4Fe-4S] cluster is required as a cofactor.

Its subcellular location is the plastid. The protein resides in the chloroplast thylakoid membrane. The catalysed reaction is reduced [plastocyanin] + hnu + oxidized [2Fe-2S]-[ferredoxin] = oxidized [plastocyanin] + reduced [2Fe-2S]-[ferredoxin]. Apoprotein for the two 4Fe-4S centers FA and FB of photosystem I (PSI); essential for photochemical activity. FB is the terminal electron acceptor of PSI, donating electrons to ferredoxin. The C-terminus interacts with PsaA/B/D and helps assemble the protein into the PSI complex. Required for binding of PsaD and PsaE to PSI. PSI is a plastocyanin-ferredoxin oxidoreductase, converting photonic excitation into a charge separation, which transfers an electron from the donor P700 chlorophyll pair to the spectroscopically characterized acceptors A0, A1, FX, FA and FB in turn. This is Photosystem I iron-sulfur center from Spinacia oleracea (Spinach).